The chain runs to 216 residues: Adenylate kinase (216 aa).

10-15 (GAGKGT) serves as a coordination point for ATP. The interval 30–59 (STGDIFRKNIKEGTELGKKAKEYMDQGLLV) is NMP. AMP-binding positions include Thr-31, Arg-36, 57–59 (LLV), 85–88 (GFPR), and Gln-92. An LID region spans residues 126-163 (GRRICKSCGATYHVEFNPPKVEGVCDVCQGELYQRADD). Arg-127 contacts ATP. The Zn(2+) site is built by Cys-130 and Cys-133. Residue 136-137 (TY) participates in ATP binding. Zn(2+) contacts are provided by Cys-150 and Cys-153. Residues Arg-160 and Arg-171 each contribute to the AMP site. Residue Gln-199 coordinates ATP.

It belongs to the adenylate kinase family. In terms of assembly, monomer.

It localises to the cytoplasm. The enzyme catalyses AMP + ATP = 2 ADP. The protein operates within purine metabolism; AMP biosynthesis via salvage pathway; AMP from ADP: step 1/1. Its function is as follows. Catalyzes the reversible transfer of the terminal phosphate group between ATP and AMP. Plays an important role in cellular energy homeostasis and in adenine nucleotide metabolism. The protein is Adenylate kinase of Clostridioides difficile (strain 630) (Peptoclostridium difficile).